A 172-amino-acid chain; its full sequence is Shikimate kinase (172 aa).

Gly-11–Thr-16 provides a ligand contact to ATP. Ser-15 is a binding site for Mg(2+). Residues Asp-33, Arg-57, and Gly-79 each contribute to the substrate site. An ATP-binding site is contributed by Arg-117. Residue Arg-136 participates in substrate binding. Arg-153 is an ATP binding site.

The protein belongs to the shikimate kinase family. Monomer. Requires Mg(2+) as cofactor.

It localises to the cytoplasm. It carries out the reaction shikimate + ATP = 3-phosphoshikimate + ADP + H(+). It participates in metabolic intermediate biosynthesis; chorismate biosynthesis; chorismate from D-erythrose 4-phosphate and phosphoenolpyruvate: step 5/7. Its function is as follows. Catalyzes the specific phosphorylation of the 3-hydroxyl group of shikimic acid using ATP as a cosubstrate. This chain is Shikimate kinase, found in Pseudomonas syringae pv. tomato (strain ATCC BAA-871 / DC3000).